A 540-amino-acid chain; its full sequence is Tyrosinase (540 aa).

Positions 1–19 are cleaved as a signal peptide; it reads MKSLFLSAVLLQFFETCWS. Residues 20–480 are Lumenal, melanosome-facing; it reads QFPRPCANSE…LQQAQQIWQW (461 aa). N-linked (GlcNAc...) asparagine glycosylation occurs at N87. Cu cation contacts are provided by H182, H205, and H214. N-linked (GlcNAc...) asparagine glycosylation is found at N233, N293, and N340. Residues H366 and H370 each contribute to the Cu cation site. The N-linked (GlcNAc...) asparagine glycan is linked to N374. Residue H393 coordinates Cu cation. The chain crosses the membrane as a helical span at residues 481–501; sequence LLGAGILGALIATIVAAVIVF. Over 502–540 the chain is Cytoplasmic; sequence ARRKRRRNQKRKRAPSFGERQPLLQSSSEEGSSSYQTTL. The tract at residues 511-540 is disordered; it reads KRKRAPSFGERQPLLQSSSEEGSSSYQTTL. Low complexity predominate over residues 527–540; the sequence is SSSEEGSSSYQTTL.

The protein belongs to the tyrosinase family. Cu(2+) is required as a cofactor.

Its subcellular location is the melanosome membrane. The enzyme catalyses 2 L-dopa + O2 = 2 L-dopaquinone + 2 H2O. It carries out the reaction L-tyrosine + O2 = L-dopaquinone + H2O. Its function is as follows. This is a copper-containing oxidase that functions in the formation of pigments such as melanins and other polyphenolic compounds. The sequence is that of Tyrosinase (tyr) from Oryzias latipes (Japanese rice fish).